A 780-amino-acid polypeptide reads, in one-letter code: Mediator of RNA polymerase II transcription subunit 15 (780 aa).

The interaction with nhr-49 stretch occupies residues 1–124; sequence MSEEDWPSPK…PQPTSAQARN (124 aa). The tract at residues 2 to 96 is interaction with sbp-1; the sequence is SEEDWPSPKF…SPPCTTAALL (95 aa). 3 disordered regions span residues 91 to 152, 166 to 363, and 564 to 597; these read TTAA…APSA, PSPD…QGMM, and GPGP…GTPN. Residues 125-139 show a composition bias toward low complexity; the sequence is PPVTVATTQASTTPS. The span at 225 to 245 shows a compositional bias: gly residues; it reads PPNGYGGYGMMNGPPGSGAPM. Over residues 296-316 the composition is skewed to polar residues; sequence QGATPTGPSSVLESLINQPQQ. Low complexity-rich tracts occupy residues 333–353 and 574–594; these read AAQR…QQQR and SMSG…NPMG.

It belongs to the Mediator complex subunit 15 family. Component of the Mediator complex. Interacts with nhr-49, nhr-64 and sbp-1. In terms of tissue distribution, expressed in the intestine and head neurons.

It localises to the nucleus. Component of the Mediator complex, a coactivator involved in regulated gene transcription of nearly all RNA polymerase II-dependent genes. Mediator functions as a bridge to convey information from gene-specific regulatory proteins to the basal RNA polymerase II transcription machinery. Mediator is recruited to promoters by direct interactions with regulatory proteins and serves as a scaffold for the assembly of a functional preinitiation complex with RNA polymerase II and the general transcription factors. Required for regulated expression of genes controlling fatty acid desaturation by transcription factors including sbp-1 and nhr-49. Involved in the response to simulated microgravity, in concert with sbp-1, probably acting in the intestine. This Caenorhabditis elegans protein is Mediator of RNA polymerase II transcription subunit 15 (mdt-15).